Here is a 363-residue protein sequence, read N- to C-terminus: Pyrimidine monooxygenase RutA (363 aa).

FMN contacts are provided by residues Ile-49–Lys-50, Asn-115, Glu-124, Arg-140–Tyr-141, and Ser-190.

This sequence belongs to the NtaA/SnaA/DszA monooxygenase family. RutA subfamily.

The enzyme catalyses uracil + FMNH2 + NADH + O2 = (Z)-3-ureidoacrylate + FMN + NAD(+) + H2O + H(+). It carries out the reaction thymine + FMNH2 + NADH + O2 = (Z)-2-methylureidoacrylate + FMN + NAD(+) + H2O + H(+). Functionally, catalyzes the pyrimidine ring opening between N-3 and C-4 by an unusual flavin hydroperoxide-catalyzed mechanism, adding oxygen atoms in the process to yield ureidoacrylate peracid, that immediately reacts with FMN forming ureidoacrylate and FMN-N(5)-oxide. The FMN-N(5)-oxide reacts spontaneously with NADH to produce FMN. Requires the flavin reductase RutF to regenerate FMN in vivo. The chain is Pyrimidine monooxygenase RutA from Rhizobium rhizogenes (strain K84 / ATCC BAA-868) (Agrobacterium radiobacter).